Reading from the N-terminus, the 655-residue chain is ATP-dependent RNA helicase mss116, mitochondrial (655 aa).

Residues 1-56 (MMLGAVRRYGVVHALRASVPRTICRPSNSQLLRCQTSPVTACPQSVRLLHKSSPFF) constitute a mitochondrion transit peptide. The Q motif signature appears at 84–113 (DLAERGLVDPKIIRAIVKDMNIKTMTDVQS). The Helicase ATP-binding domain maps to 116–307 (LREILQGDDV…RKTMKPNFKF (192 aa)). 129 to 136 (AKTGTGKT) is a binding site for ATP. The DEAD box motif lies at 251 to 254 (DEAD). In terms of domain architecture, Helicase C-terminal spans 341-503 (EFVTKYVEGE…TFATATVDMT (163 aa)). A disordered region spans residues 594-642 (YRGSSDNMSTRPDYRGGDRDMWASNSRRGREFNSDRRESRFGNHRNADD). Basic and acidic residues-rich tracts occupy residues 605 to 614 (PDYRGGDRDM) and 621 to 642 (RGREFNSDRRESRFGNHRNADD).

It belongs to the DEAD box helicase family. DDX18/HAS1 subfamily.

The protein resides in the mitochondrion matrix. It catalyses the reaction ATP + H2O = ADP + phosphate + H(+). ATP-dependent RNA helicase required for mitochondrial splicing of group I and II introns. Also required for efficient mitochondrial translation. The chain is ATP-dependent RNA helicase mss116, mitochondrial (mss116) from Aspergillus fumigatus (strain ATCC MYA-4609 / CBS 101355 / FGSC A1100 / Af293) (Neosartorya fumigata).